The following is a 229-amino-acid chain: Large ribosomal subunit protein uL1 (229 aa).

In terms of assembly, part of the 50S ribosomal subunit.

Functionally, binds directly to 23S rRNA. The L1 stalk is quite mobile in the ribosome, and is involved in E site tRNA release. Its function is as follows. Protein L1 is also a translational repressor protein, it controls the translation of the L11 operon by binding to its mRNA. This is Large ribosomal subunit protein uL1 from Rhodopseudomonas palustris (strain ATCC BAA-98 / CGA009).